Consider the following 319-residue polypeptide: Insulin gene enhancer protein ISL-2 (319 aa).

LIM zinc-binding domains are found at residues 1–43 and 52–106; these read FLLR…CKRD and CAQC…RADH. Disordered regions lie at residues 106 to 151, 218 to 237, and 286 to 319; these read HGPP…EKTT, QQHSDKTSLQGLTGTPLVAG, and ESGSLGTSSGSDVTSLSSQLPDTPNSMVPSPAET. The segment at residues 150-209 is a DNA-binding region (homeobox); the sequence is TTRVRTVLNEKQLHTLRTCYAANPRPDALMKEQLVEMTGLSPRVIRVWFQNKRCKDKKKS. Polar residues predominate over residues 218–230; the sequence is QQHSDKTSLQGLT. Over residues 286–303 the composition is skewed to low complexity; sequence ESGSLGTSSGSDVTSLSS. Residues 304–319 are compositionally biased toward polar residues; it reads QLPDTPNSMVPSPAET.

The protein localises to the nucleus. Transcriptional factor that defines subclasses of motoneurons that segregate into columns in the spinal cord and select distinct axon pathways. Acts in conjunction with LIM-1, LIM-3 and ISL-1. In Gallus gallus (Chicken), this protein is Insulin gene enhancer protein ISL-2 (ISL2).